Here is a 163-residue protein sequence, read N- to C-terminus: Putative pre-16S rRNA nuclease (163 aa).

Belongs to the YqgF nuclease family.

It localises to the cytoplasm. Functionally, could be a nuclease involved in processing of the 5'-end of pre-16S rRNA. The protein is Putative pre-16S rRNA nuclease of Rhodopseudomonas palustris (strain BisA53).